Reading from the N-terminus, the 287-residue chain is Pyridoxal kinase PdxY (287 aa).

Substrate-binding positions include Ser9 and 44–45; that span reads TQ. ATP contacts are provided by Asp111, Glu147, and Lys180. Residue Asp221 participates in substrate binding.

It belongs to the pyridoxine kinase family. PdxY subfamily. As to quaternary structure, homodimer. Mg(2+) serves as cofactor.

The enzyme catalyses pyridoxal + ATP = pyridoxal 5'-phosphate + ADP + H(+). Its pathway is cofactor metabolism; pyridoxal 5'-phosphate salvage; pyridoxal 5'-phosphate from pyridoxal: step 1/1. Pyridoxal kinase involved in the salvage pathway of pyridoxal 5'-phosphate (PLP). Catalyzes the phosphorylation of pyridoxal to PLP. The chain is Pyridoxal kinase PdxY from Paraburkholderia phymatum (strain DSM 17167 / CIP 108236 / LMG 21445 / STM815) (Burkholderia phymatum).